The following is a 315-amino-acid chain: Ectopic P granules protein 4 (315 aa).

6 consecutive transmembrane segments (helical) span residues 84–104, 113–133, 146–166, 190–210, 221–241, and 242–262; these read IGFL…FSFF, IGYI…ALWF, LPPP…ISAL, IVYL…FFDG, IFES…LACS, and ISSN…FFII.

This sequence belongs to the EI24 family. Expressed in pharyngeal and body wall muscles and intestine cells.

It localises to the cytoplasm. The protein localises to the membrane. Functionally, involved in autophagy. Thought to act in autophagasome and omegasome formation. This chain is Ectopic P granules protein 4, found in Caenorhabditis elegans.